We begin with the raw amino-acid sequence, 92 residues long: Small ribosomal subunit protein bS18 (92 aa).

It belongs to the bacterial ribosomal protein bS18 family. As to quaternary structure, part of the 30S ribosomal subunit. Forms a tight heterodimer with protein bS6.

In terms of biological role, binds as a heterodimer with protein bS6 to the central domain of the 16S rRNA, where it helps stabilize the platform of the 30S subunit. In Pelagibacter ubique (strain HTCC1062), this protein is Small ribosomal subunit protein bS18.